Reading from the N-terminus, the 104-residue chain is COX assembly mitochondrial protein 1 (104 aa).

The CHCH domain maps to 10–52; it reads QKQCADLIRALEECHKSFGKFFGECNTIKYELKACLTKDRNDK. 2 short sequence motifs (cx9C motif) span residues 13 to 23 and 34 to 44; these read CADLIRALEEC and CNTIKYELKAC. Disulfide bonds link cysteine 13-cysteine 44 and cysteine 23-cysteine 34.

Belongs to the CMC family.

It localises to the mitochondrion inner membrane. Functionally, required for mitochondrial cytochrome c oxidase (COX) assembly and respiration. This chain is COX assembly mitochondrial protein 1 (cmc1), found in Schizosaccharomyces pombe (strain 972 / ATCC 24843) (Fission yeast).